The primary structure comprises 210 residues: HTH-type transcriptional repressor FabR (210 aa).

Residues 10-70 (KTRRSLVEAA…TMVDESGLML (61 aa)) enclose the HTH tetR-type domain. Residues 33-52 (SLREVAREAGIAPTSFYRHF) constitute a DNA-binding region (H-T-H motif).

As to quaternary structure, homodimer.

The protein resides in the cytoplasm. Represses the transcription of fabB, involved in unsaturated fatty acid (UFA) biosynthesis. By controlling UFA production, FabR directly influences the physical properties of the membrane bilayer. The polypeptide is HTH-type transcriptional repressor FabR (Citrobacter koseri (strain ATCC BAA-895 / CDC 4225-83 / SGSC4696)).